A 133-amino-acid polypeptide reads, in one-letter code: Small ribosomal subunit protein eS8 (133 aa).

Residues 1 to 34 (MGVWHGRSLRKPTGGRIRPHRKKRKFEMGNPPTE) form a disordered region.

This sequence belongs to the eukaryotic ribosomal protein eS8 family. Part of the 30S ribosomal subunit.

This chain is Small ribosomal subunit protein eS8, found in Methanopyrus kandleri (strain AV19 / DSM 6324 / JCM 9639 / NBRC 100938).